A 483-amino-acid chain; its full sequence is Jacalin-related lectin 13 (483 aa).

Residues 1–20 (MTQKLESVGSERKSSEYMWD) are disordered. Jacalin-type lectin domains are found at residues 2-147 (TQKL…YVTW), 150-295 (PARM…YFTT), and 307-461 (FREK…YFFP).

The protein belongs to the jacalin lectin family.

The protein is Jacalin-related lectin 13 (JAL13) of Arabidopsis thaliana (Mouse-ear cress).